Consider the following 177-residue polypeptide: UBA-like domain-containing protein 1 (177 aa).

Residues 89–177 (ESFHSGGSGS…RAHPAMEAER (89 aa)) are disordered. Residues 112 to 138 (PHAATSSSAASSWPTAASPPGGPQHHQ) show a composition bias toward low complexity. Pro residues predominate over residues 139–151 (PQPPLWTPTPPSP). Positions 167-177 (PRAHPAMEAER) are enriched in basic and acidic residues.

The protein belongs to the UBALD family.

This chain is UBA-like domain-containing protein 1 (UBALD1), found in Homo sapiens (Human).